The primary structure comprises 198 residues: Probable GTP-binding protein EngB (198 aa).

In terms of domain architecture, EngB-type G spans Asn21–Gly195. GTP-binding positions include Gly29 to Ser36, Gly56 to Leu60, Asp81 to Gly84, Thr151 to Asp154, and Val174 to Asn176. Mg(2+) is bound by residues Ser36 and Thr58.

Belongs to the TRAFAC class TrmE-Era-EngA-EngB-Septin-like GTPase superfamily. EngB GTPase family. Mg(2+) serves as cofactor.

In terms of biological role, necessary for normal cell division and for the maintenance of normal septation. The polypeptide is Probable GTP-binding protein EngB (Campylobacter jejuni subsp. jejuni serotype O:6 (strain 81116 / NCTC 11828)).